Reading from the N-terminus, the 423-residue chain is G-protein coupled receptor 83 (423 aa).

The N-terminal stretch at 1 to 16 (MVPHLLLLCLLPLVRA) is a signal peptide. Residues 18–71 (EPHEGRADEQSAEAALAVPNASHFFSWNNYTFSDWQNFVGRRRYGAESQNPTVK) lie on the Extracellular side of the membrane. N37 and N46 each carry an N-linked (GlcNAc...) asparagine glycan. Residues 72–92 (ALLIVAYSFIIVFSLFGNVLV) traverse the membrane as a helical segment. The Cytoplasmic segment spans residues 93-107 (CHVIFKNQRMHSATS). Residues 108-129 (LFIVNLAVADIMITLLNTPFTL) traverse the membrane as a helical segment. Topologically, residues 130–145 (VRFVNSTWIFGKGMCH) are extracellular. N134 carries N-linked (GlcNAc...) asparagine glycosylation. An intrachain disulfide couples C144 to C224. Residues 146–167 (VSRFAQYCSLHVSALTLTAIAV) traverse the membrane as a helical segment. The Cytoplasmic portion of the chain corresponds to 168–186 (DRHQVIMHPLKPRISITKG). Residues 187–208 (VIYIAVIWTMATFFSLPHAICQ) traverse the membrane as a helical segment. Over 209-238 (KLFTFKYSEDIVRSLCLPDFPEPADLFWKY) the chain is Extracellular. Residues 239 to 260 (LDLATFILLYILPLLIISVAYA) traverse the membrane as a helical segment. The Cytoplasmic portion of the chain corresponds to 261–293 (RVAKKLWLCNMIGDVTTEQYFALRRKKKKTIKM). Residues 294–315 (LMLVVVLFALCWFPLNCYVLLL) traverse the membrane as a helical segment. At 316–327 (SSKVIRTNNALY) the chain is on the extracellular side. The chain crosses the membrane as a helical span at residues 328–348 (FAFHWFAMSSTCYNPFIYCWL). Topologically, residues 349 to 423 (NENFRIELKA…SSVEPIVTMS (75 aa)) are cytoplasmic. A compositionally biased stretch (polar residues) spans 402–414 (PTSQLQSGKTDLS). The interval 402–423 (PTSQLQSGKTDLSSVEPIVTMS) is disordered.

It belongs to the G-protein coupled receptor 1 family. In terms of tissue distribution, highly expressed in the brain and spinal cord, and found in lower concentrations in the thymus and other tissues.

It localises to the cell membrane. Its function is as follows. G-protein coupled receptor for PEN, a neuropeptide produced from the precursor protein, proSAAS (encoded by PCSK1N). Acts through a G(i)- and G(q)-alpha-alpha-mediated pathway in response to PEN. Plays a role in food intake and body weight regulation. May contribute to the regulation of anxiety-related behaviors. This is G-protein coupled receptor 83 from Homo sapiens (Human).